The primary structure comprises 562 residues: Carboxylesterase 1E (562 aa).

A signal peptide spans 1 to 19 (MCLSALILVSLAAFTAGAG). N-linked (GlcNAc...) asparagine glycosylation is present at Asn-80. Residues Cys-88 and Cys-117 are joined by a disulfide bond. Ser-222 (acyl-ester intermediate) is an active-site residue. A disulfide bridge links Cys-274 with Cys-285. Asn-276 carries N-linked (GlcNAc...) asparagine glycosylation. Catalysis depends on charge relay system residues Glu-354 and His-467. A glycan (N-linked (GlcNAc...) asparagine) is linked at Asn-490. Positions 559–562 (HTEL) match the Prevents secretion from ER motif.

Belongs to the type-B carboxylesterase/lipase family.

It is found in the endoplasmic reticulum lumen. It localises to the microsome membrane. It catalyses the reaction a carboxylic ester + H2O = an alcohol + a carboxylate + H(+). The enzyme catalyses all-trans-retinyl hexadecanoate + H2O = all-trans-retinol + hexadecanoate + H(+). Its function is as follows. Involved in the detoxification of xenobiotics and in the activation of ester and amide prodrugs. Hydrolyzes retinyl esters. This chain is Carboxylesterase 1E, found in Mus musculus (Mouse).